The chain runs to 105 residues: Putative membrane protein insertion efficiency factor (105 aa).

Residues 76–105 (GHPGGVDPVPPGPHETPRKTSTHDDEPPSR) form a disordered region. Positions 90–105 (ETPRKTSTHDDEPPSR) are enriched in basic and acidic residues.

This sequence belongs to the UPF0161 family.

The protein localises to the cell inner membrane. Could be involved in insertion of integral membrane proteins into the membrane. In Chromohalobacter salexigens (strain ATCC BAA-138 / DSM 3043 / CIP 106854 / NCIMB 13768 / 1H11), this protein is Putative membrane protein insertion efficiency factor.